A 149-amino-acid polypeptide reads, in one-letter code: Large ribosomal subunit protein bL9 (149 aa).

The protein belongs to the bacterial ribosomal protein bL9 family.

Its function is as follows. Binds to the 23S rRNA. This Geobacillus sp. (strain WCH70) protein is Large ribosomal subunit protein bL9.